A 1871-amino-acid chain; its full sequence is Protein RRP5 homolog (1871 aa).

Positions 1–62 are disordered; it reads MANLEESFPR…KTKKLKIEKR (62 aa). An N-acetylalanine modification is found at alanine 2. Serine 7 is modified (phosphoserine). A compositionally biased stretch (basic residues) spans 43–59; that stretch reads KRKKSQKGPAKTKKLKI. 4 S1 motif domains span residues 83 to 171, 187 to 258, 281 to 346, and 365 to 436; these read GMRI…LSLN, GMLL…LSVG, GLVV…LSLR, and GAVL…LSLR. Serine 438 is subject to Phosphoserine. S1 motif domains follow at residues 453 to 522, 542 to 611, 636 to 707, and 729 to 798; these read GAVV…MTLK, GLQT…LSFK, GQLV…LCRK, and GMLL…LSLR. Positions 998 to 1018 are disordered; the sequence is AAKRTMRPTQKDSETVDEDEE. A Glycyl lysine isopeptide (Lys-Gly) (interchain with G-Cter in SUMO1) cross-link involves residue lysine 1030. S1 motif domains are found at residues 1036–1109, 1149–1222, 1230–1298, and 1324–1396; these read GDMV…ISHP, GQTV…LSLT, GEVA…LSLR, and GQLL…LSFL. Phosphoserine occurs at positions 1360 and 1362. 2 disordered regions span residues 1395–1531 and 1549–1586; these read FLPG…APRL and ALPP…KAEK. Residue lysine 1416 forms a Glycyl lysine isopeptide (Lys-Gly) (interchain with G-Cter in SUMO2) linkage. Composition is skewed to basic and acidic residues over residues 1416–1459 and 1469–1484; these read KQEE…EKQQ and GGRE…ERVS. Phosphoserine occurs at positions 1476, 1493, and 1498. The segment covering 1575–1586 has biased composition (basic and acidic residues); that stretch reads KERELEKQKAEK. 4 HAT repeats span residues 1599–1631, 1705–1737, 1775–1807, and 1809–1844; these read GRQP…FHLQ, EKFQ…FLLR, GDAE…MTIK, and GSQK…YEKQ.

Interacts with NF-kappa-B p50/NFKB1 and NF-kappa-B p65/RELA.

It is found in the nucleus. It localises to the nucleolus. Essential for the generation of mature 18S rRNA, specifically necessary for cleavages at sites A0, 1 and 2 of the 47S precursor. Directly interacts with U3 snoRNA. In terms of biological role, involved in the biogenesis of rRNA. In Homo sapiens (Human), this protein is Protein RRP5 homolog (PDCD11).